The chain runs to 418 residues: Gamma-glutamyl phosphate reductase (418 aa).

Belongs to the gamma-glutamyl phosphate reductase family.

Its subcellular location is the cytoplasm. The enzyme catalyses L-glutamate 5-semialdehyde + phosphate + NADP(+) = L-glutamyl 5-phosphate + NADPH + H(+). It participates in amino-acid biosynthesis; L-proline biosynthesis; L-glutamate 5-semialdehyde from L-glutamate: step 2/2. Its function is as follows. Catalyzes the NADPH-dependent reduction of L-glutamate 5-phosphate into L-glutamate 5-semialdehyde and phosphate. The product spontaneously undergoes cyclization to form 1-pyrroline-5-carboxylate. The protein is Gamma-glutamyl phosphate reductase of Geotalea uraniireducens (strain Rf4) (Geobacter uraniireducens).